Here is a 241-residue protein sequence, read N- to C-terminus: Uridylate kinase (241 aa).

ATP is bound at residue 12 to 15 (KISG). The tract at residues 20–25 (GEKGTG) is involved in allosteric activation by GTP. Residue Gly-54 participates in UMP binding. Residues Gly-55 and Arg-59 each contribute to the ATP site. Residues Asp-74 and 135-142 (TGNPYFST) each bind UMP. Residues Asn-163, Tyr-169, and Asp-172 each contribute to the ATP site.

It belongs to the UMP kinase family. Homohexamer.

The protein resides in the cytoplasm. It carries out the reaction UMP + ATP = UDP + ADP. Its pathway is pyrimidine metabolism; CTP biosynthesis via de novo pathway; UDP from UMP (UMPK route): step 1/1. With respect to regulation, allosterically activated by GTP. Inhibited by UTP. Catalyzes the reversible phosphorylation of UMP to UDP. This is Uridylate kinase from Lactobacillus delbrueckii subsp. bulgaricus (strain ATCC 11842 / DSM 20081 / BCRC 10696 / JCM 1002 / NBRC 13953 / NCIMB 11778 / NCTC 12712 / WDCM 00102 / Lb 14).